The primary structure comprises 572 residues: Transmembrane glycoprotein NMB (572 aa).

The signal sequence occupies residues 1–22 (MESLCGVLVFLLLAAGLPLQAA). Residues 23-500 (KRFRDVLGHE…DLGSPLRTVN (478 aa)) are Extracellular-facing. N-linked (GlcNAc...) asparagine glycosylation is found at Asn-93, Asn-134, Asn-200, Asn-249, Asn-275, Asn-296, Asn-300, Asn-306, and Asn-312. The 88-residue stretch at 251–338 (SDETFLRDLP…SPSSSTSPSP (88 aa)) folds into the PKD domain. The interval 321–359 (GPCPSPTPSPSSSTSPSPASSPSPTLSTPSPSLMPTGHK) is disordered. The segment covering 330–356 (PSSSTSPSPASSPSPTLSTPSPSLMPT) has biased composition (low complexity). 2 N-linked (GlcNAc...) asparagine glycosylation sites follow: Asn-461 and Asn-469. Residues 501-521 (GVLISIGCLAMFVTMVTILLY) traverse the membrane as a helical segment. Topologically, residues 522-572 (KKHKTYKPIGNCTRNVVKGKGLSVFLSHAKAPFSRGDREKDPLLQDKPWML) are cytoplasmic. Ser-544 carries the post-translational modification Phosphoserine. Positions 556–558 (RGD) match the Cell attachment site motif.

The protein belongs to the PMEL/NMB family.

Its subcellular location is the cell membrane. It is found in the melanosome membrane. It localises to the early endosome membrane. Functionally, could be a melanogenic enzyme. This Rattus norvegicus (Rat) protein is Transmembrane glycoprotein NMB (Gpnmb).